We begin with the raw amino-acid sequence, 303 residues long: Imidazoleglycerol-phosphate dehydratase (303 aa).

This sequence belongs to the imidazoleglycerol-phosphate dehydratase family.

Its subcellular location is the cytoplasm. It catalyses the reaction D-erythro-1-(imidazol-4-yl)glycerol 3-phosphate = 3-(imidazol-4-yl)-2-oxopropyl phosphate + H2O. It participates in amino-acid biosynthesis; L-histidine biosynthesis; L-histidine from 5-phospho-alpha-D-ribose 1-diphosphate: step 6/9. The chain is Imidazoleglycerol-phosphate dehydratase from Neisseria gonorrhoeae (strain ATCC 700825 / FA 1090).